The sequence spans 304 residues: Homoserine O-acetyltransferase (304 aa).

Catalysis depends on Cys142, which acts as the Acyl-thioester intermediate. Residues Lys163 and Ser191 each contribute to the substrate site. The active-site Proton acceptor is His234. Residue Glu236 is part of the active site. Arg248 provides a ligand contact to substrate.

The protein belongs to the MetA family.

The protein localises to the cytoplasm. The enzyme catalyses L-homoserine + acetyl-CoA = O-acetyl-L-homoserine + CoA. It participates in amino-acid biosynthesis; L-methionine biosynthesis via de novo pathway; O-acetyl-L-homoserine from L-homoserine: step 1/1. Transfers an acetyl group from acetyl-CoA to L-homoserine, forming acetyl-L-homoserine. This chain is Homoserine O-acetyltransferase, found in Thermotoga petrophila (strain ATCC BAA-488 / DSM 13995 / JCM 10881 / RKU-1).